A 750-amino-acid polypeptide reads, in one-letter code: Glutathione biosynthesis bifunctional protein GshAB (750 aa).

The segment at 1-333 (MIIDRLLQRS…EANRLNDLIA (333 aa)) is glutamate--cysteine ligase. The segment at 32–51 (QPTQRVAQTPHPKTLGSRNY) is disordered. Residues 489–747 (KKILDEKHFP…ITPRILAKLF (259 aa)) form the ATP-grasp domain. 516 to 574 (SQIQDKPIVVKPKSTNFGLGISIFKTSANLASYEKAIDIAFTEDSAILVEEYIEGTEYR) contacts ATP. Mg(2+) is bound by residues Asp696, Glu717, and Asn719. Asp696, Glu717, and Asn719 together coordinate Mn(2+).

In the N-terminal section; belongs to the glutamate--cysteine ligase type 1 family. Type 2 subfamily. In terms of assembly, monomer. It depends on Mg(2+) as a cofactor. Requires Mn(2+) as cofactor.

It catalyses the reaction L-cysteine + L-glutamate + ATP = gamma-L-glutamyl-L-cysteine + ADP + phosphate + H(+). The enzyme catalyses gamma-L-glutamyl-L-cysteine + glycine + ATP = glutathione + ADP + phosphate + H(+). The protein operates within sulfur metabolism; glutathione biosynthesis; glutathione from L-cysteine and L-glutamate: step 1/2. It functions in the pathway sulfur metabolism; glutathione biosynthesis; glutathione from L-cysteine and L-glutamate: step 2/2. Its function is as follows. Synthesizes glutathione from L-glutamate and L-cysteine via gamma-L-glutamyl-L-cysteine. The protein is Glutathione biosynthesis bifunctional protein GshAB of Streptococcus agalactiae serotype III (strain NEM316).